Reading from the N-terminus, the 146-residue chain is uncharacterized protein (146 aa).

The N-terminal stretch at 1-26 is a signal peptide; it reads MQFRPSIALVLSIVGILSLEISWTDG.

As to expression, prismatic layer of shell (at protein level). Expressed primarily in the mantle with highest level in the mantle edge and lower level in the mantle pallium.

The protein localises to the secreted. This is an uncharacterized protein from Margaritifera margaritifera (Freshwater pearl mussel).